A 423-amino-acid polypeptide reads, in one-letter code: AP-1 complex subunit mu-2 (423 aa).

One can recognise an MHD domain in the interval 168-421; it reads KNEVFIDVIE…ITQSGDYQLR (254 aa).

It belongs to the adaptor complexes medium subunit family. As to quaternary structure, adaptor protein complex 1 (AP-1) is a heterotetramer composed of two large adaptins (gamma-type subunit AP1G1 and beta-type subunit AP1B1), a medium adaptin (mu-type subunit AP1M1 or AP1M2) and a small adaptin (sigma-type subunit AP1S1 or AP1S2 or AP1S3). Interacts with P2X4. Phosphorylation of membrane-bound AP1M1/AP1M2 increases its affinity for sorting signals.

It localises to the golgi apparatus. Its subcellular location is the cytoplasmic vesicle. The protein resides in the clathrin-coated vesicle membrane. In terms of biological role, subunit of clathrin-associated adaptor protein complex 1 that plays a role in protein sorting in the trans-Golgi network (TGN) and endosomes. The AP complexes mediate the recruitment of clathrin to membranes and the recognition of sorting signals within the cytosolic tails of transmembrane cargo molecules. This Mus musculus (Mouse) protein is AP-1 complex subunit mu-2 (Ap1m2).